Here is a 439-residue protein sequence, read N- to C-terminus: Xylose isomerase (439 aa).

Residues His99 and Asp102 contribute to the active site. Residues Glu230, Glu266, His269, Asp294, Asp305, Asp307, and Asp337 each contribute to the Mg(2+) site.

The protein belongs to the xylose isomerase family. Homotetramer. Mg(2+) serves as cofactor.

The protein localises to the cytoplasm. The enzyme catalyses alpha-D-xylose = alpha-D-xylulofuranose. In Oceanobacillus iheyensis (strain DSM 14371 / CIP 107618 / JCM 11309 / KCTC 3954 / HTE831), this protein is Xylose isomerase.